The following is a 401-amino-acid chain: Diphosphomevalonate decarboxylase (401 aa).

N-acetylalanine is present on Ala-2. (R)-5-diphosphomevalonate is bound by residues 24 to 27, Arg-79, 157 to 162, and Thr-213; these read YWGK and SGSACR. The interval 382–401 is disordered; sequence VLDDPHHHLLGPDGLPQRDL.

This sequence belongs to the diphosphomevalonate decarboxylase family. As to quaternary structure, homodimer.

The protein localises to the cytoplasm. The catalysed reaction is (R)-5-diphosphomevalonate + ATP = isopentenyl diphosphate + ADP + phosphate + CO2. The protein operates within steroid biosynthesis; cholesterol biosynthesis. In terms of biological role, catalyzes the ATP dependent decarboxylation of (R)-5-diphosphomevalonate to form isopentenyl diphosphate (IPP). Functions in the mevalonate (MVA) pathway leading to isopentenyl diphosphate (IPP), a key precursor for the biosynthesis of isoprenoids and sterol synthesis. The protein is Diphosphomevalonate decarboxylase (Mvd) of Rattus norvegicus (Rat).